Reading from the N-terminus, the 58-residue chain is Large ribosomal subunit protein bL32 (58 aa).

The protein belongs to the bacterial ribosomal protein bL32 family.

The sequence is that of Large ribosomal subunit protein bL32 from Thermobifida fusca (strain YX).